The following is a 566-amino-acid chain: MDFKKLAAEEIKKNIDLELNFIEGLIEVPPKPEMGDYAFPCFQLAKVLKKAPNIISKELKDKLHSKYFEKIENLGPYVNFFVDKKIFTEYTLKEILLKGDSYGSSDMGEGKNVVVEYSSPNIAKPFHVGHLFSTSIGNALYKMINFQGYNCTRINHLGDWGTQFGKLIAAYNRWCNAEELNRDPIKELLRIYVKFHEEAEKDPSLNEEGRMYFKKLEDGSEEEIKLWKKFKDLSLREFKKVYDLLKVDFDSYAGESFYTDKMDAVVEEIDKKGLLVESNGAKVVLLDEYNIPPCIVKKSDGTTIYATRDLAAAIYRKKTYDFYKSIYVVGLDQSLHFKQVFTTLKLMGKDWADSCKHVGFGLVRFANKKLSTRKGDVIFLEELLNKSVERTLEIINEKNPKLENKEEAAKKIGIGAVIFTYLKNNREKDIVFDWNEMLSFEGETGPYVQYSYARGKSILRKSEEASYDENQIDYSKLGSKEEFELVKILENFNKSIINAINRLEPFIVTRYVIDVAKAFNKFYNAHSIMNAADENIKKARLYLVKCTCQVLKNGLNLMGIEVVEKM.

A 'HIGH' region motif is present at residues 120–130 (PNIAKPFHVGH).

This sequence belongs to the class-I aminoacyl-tRNA synthetase family. In terms of assembly, monomer.

The protein resides in the cytoplasm. It carries out the reaction tRNA(Arg) + L-arginine + ATP = L-arginyl-tRNA(Arg) + AMP + diphosphate. In Clostridium kluyveri (strain NBRC 12016), this protein is Arginine--tRNA ligase.